Consider the following 618-residue polypeptide: Dihydroxy-acid dehydratase (618 aa).

Position 81 (Asp81) interacts with Mg(2+). Cys122 is a binding site for [2Fe-2S] cluster. Residues Asp123 and Lys124 each contribute to the Mg(2+) site. Residue Lys124 is modified to N6-carboxylysine. Cys195 contacts [2Fe-2S] cluster. Glu490 contacts Mg(2+). Ser516 serves as the catalytic Proton acceptor.

The protein belongs to the IlvD/Edd family. Homodimer. [2Fe-2S] cluster serves as cofactor. It depends on Mg(2+) as a cofactor.

It catalyses the reaction (2R)-2,3-dihydroxy-3-methylbutanoate = 3-methyl-2-oxobutanoate + H2O. It carries out the reaction (2R,3R)-2,3-dihydroxy-3-methylpentanoate = (S)-3-methyl-2-oxopentanoate + H2O. It participates in amino-acid biosynthesis; L-isoleucine biosynthesis; L-isoleucine from 2-oxobutanoate: step 3/4. The protein operates within amino-acid biosynthesis; L-valine biosynthesis; L-valine from pyruvate: step 3/4. Its function is as follows. Functions in the biosynthesis of branched-chain amino acids. Catalyzes the dehydration of (2R,3R)-2,3-dihydroxy-3-methylpentanoate (2,3-dihydroxy-3-methylvalerate) into 2-oxo-3-methylpentanoate (2-oxo-3-methylvalerate) and of (2R)-2,3-dihydroxy-3-methylbutanoate (2,3-dihydroxyisovalerate) into 2-oxo-3-methylbutanoate (2-oxoisovalerate), the penultimate precursor to L-isoleucine and L-valine, respectively. This Gluconobacter oxydans (strain 621H) (Gluconobacter suboxydans) protein is Dihydroxy-acid dehydratase.